The primary structure comprises 841 residues: Probable inorganic carbon transporter subunit DabA 1 (841 aa).

The Zn(2+) site is built by cysteine 352, aspartate 354, histidine 536, and cysteine 551.

This sequence belongs to the inorganic carbon transporter (TC 9.A.2) DabA family. In terms of assembly, forms a complex with DabB. It depends on Zn(2+) as a cofactor.

The protein localises to the cell inner membrane. Its function is as follows. Part of an energy-coupled inorganic carbon pump. This chain is Probable inorganic carbon transporter subunit DabA 1, found in Bradyrhizobium sp. (strain ORS 278).